Reading from the N-terminus, the 540-residue chain is Bifunctional ribokinase/ribose-5-phosphate isomerase A (540 aa).

Positions 1-308 (MKKIIVVGST…AILNVINQDQ (308 aa)) are ribokinase. Substrate is bound by residues 11–13 (NVD), 39–44 (GGKGAN), and E141. Residues N185 and 221–226 (TVGGRG) contribute to the ATP site. K(+) is bound by residues D247 and T249. Position 252–253 (252–253 (GD)) interacts with ATP. Position 253 (D253) interacts with substrate. D253 acts as the Proton acceptor; for ribokinase activity in catalysis. K(+)-binding residues include T284, V287, G289, and S293. The tract at residues 309-540 (MTKTEIEKQK…IKTIKRSDLS (232 aa)) is ribose-5-phosphate isomerase A. Substrate is bound by residues 339 to 342 (SGTT), 395 to 398 (DGAD), and 408 to 411 (KGGG). E417 (proton acceptor; for ribose-5-phosphate isomerase activity) is an active-site residue. K435 lines the substrate pocket.

This sequence in the N-terminal section; belongs to the carbohydrate kinase PfkB family. Ribokinase subfamily. In the C-terminal section; belongs to the ribose 5-phosphate isomerase family. Mg(2+) is required as a cofactor.

The protein localises to the cytoplasm. It carries out the reaction D-ribose + ATP = D-ribose 5-phosphate + ADP + H(+). The catalysed reaction is aldehydo-D-ribose 5-phosphate = D-ribulose 5-phosphate. The protein operates within carbohydrate metabolism; D-ribose degradation; D-ribose 5-phosphate from beta-D-ribopyranose: step 2/2. It functions in the pathway carbohydrate degradation; pentose phosphate pathway; D-ribose 5-phosphate from D-ribulose 5-phosphate (non-oxidative stage): step 1/1. Activated by a monovalent cation that binds near, but not in, the active site. The most likely occupant of the site in vivo is potassium. Also activated by ammonium ion. Ion binding induces a conformational change that may alter substrate affinity. Bifunctional enzyme that catalyzes the phosphorylation of ribose at O-5 in a reaction requiring ATP and magnesium, and the reversible conversion of ribose 5-phosphate to ribulose 5-phosphate. In Fructilactobacillus sanfranciscensis (strain ATCC 27651 / DSM 20451 / JCM 5668 / CCUG 30143 / KCTC 3205 / NCIMB 702811 / NRRL B-3934 / L-12) (Lactobacillus sanfranciscensis), this protein is Bifunctional ribokinase/ribose-5-phosphate isomerase A (rbsK/rbiA).